A 333-amino-acid polypeptide reads, in one-letter code: HTH-type transcriptional regulator Cphy_2742 (333 aa).

Residues Met1–Leu55 enclose the HTH lacI-type domain. The segment at residues Ile3 to Asn22 is a DNA-binding region (H-T-H motif).

The protein resides in the cytoplasm. Functionally, involved in control of pectin and galacturonic acid metabolism. Probably represses a comprehensive set of pectin fermentation genes by binding a conserved palindrome at or downstream of their transcription start site to block transcription. In the presence of galacturonic acid may activate transcription of acetate synthesis and other aspects of carbon metabolism. In Lachnoclostridium phytofermentans (strain ATCC 700394 / DSM 18823 / ISDg) (Clostridium phytofermentans), this protein is HTH-type transcriptional regulator Cphy_2742.